The chain runs to 222 residues: Glutathione S-transferase (222 aa).

One can recognise a GST N-terminal domain in the interval 3–83; that stretch reads GKPKLHYTRG…YIAGKYNLYG (81 aa). Residues Y9, R45, 54–55, and 67–68 each bind glutathione; these read QV and QS. The GST C-terminal domain occupies 85–208; sequence DLKERAWIDM…QPGSQRKPPL (124 aa).

This sequence belongs to the GST superfamily. Alpha family. As to quaternary structure, homodimer.

The protein resides in the cytoplasm. It carries out the reaction RX + glutathione = an S-substituted glutathione + a halide anion + H(+). Its function is as follows. Conjugation of reduced glutathione to a wide number of exogenous and endogenous hydrophobic electrophiles. This Gallus gallus (Chicken) protein is Glutathione S-transferase.